Here is a 218-residue protein sequence, read N- to C-terminus: Ependymin (218 aa).

Residues 1–20 (MHTVKLLCVVFSCLCAVAWG) form the signal peptide. N-linked (GlcNAc...) asparagine glycans are attached at residues Asn74 and Asn97.

It belongs to the ependymin family. As to quaternary structure, forms disulfide-linked dimers. In terms of processing, binds calcium through the terminal sialic acids.

Its subcellular location is the secreted. In terms of biological role, may play a role in neural plasticity. May be involved during axon regeneration. This is Ependymin (epd) from Devario aequipinnatus (Giant danio).